We begin with the raw amino-acid sequence, 963 residues long: Importin-13 (963 aa).

HEAT repeat units follow at residues 24–54 (ESVE…QAQV), 56–88 (PQAW…KTSR), 95–135 (TDQY…LSMM), 142–179 (AVAD…EFQT), 194–231 (LAVE…SWVQ), 236–268 (LQDC…NAIS), 276–325 (VNTL…ALLD), 330–372 (WQSF…DDIL), 375–438 (EAEK…YEML), 440–476 (AELL…FQSI), 487–522 (VVPG…WLAD), 524–558 (PVMI…CREC), 562–600 (LPPY…LLSA), 603–648 (VEEI…SNLF), 676–716 (PVVV…VKTL), 720–754 (FAPM…VHIF), 761–803 (FPPI…ALKR), 815–845 (VKAV…TELL), 860–893 (EDGR…FALN), and 897–931 (FSLL…QQIL). Residues 45 to 111 (AQKWLMQAQV…KAQLFTQITR (67 aa)) form the Importin N-terminal domain.

The protein belongs to the importin beta family. As to quaternary structure, interacts with UBC9, RAN, RBM8A, eIF-1A and PAX6.

It localises to the cytoplasm. Its subcellular location is the nucleus. In terms of biological role, functions in nuclear protein import as nuclear transport receptor. Serves as receptor for nuclear localization signals (NLS) in cargo substrates. Is thought to mediate docking of the importin/substrate complex to the nuclear pore complex (NPC) through binding to nucleoporin and the complex is subsequently translocated through the pore by an energy requiring, Ran-dependent mechanism. At the nucleoplasmic side of the NPC, Ran binds to the importin, the importin/substrate complex dissociates and importin is re-exported from the nucleus to the cytoplasm where GTP hydrolysis releases Ran. The directionality of nuclear import is thought to be conferred by an asymmetric distribution of the GTP- and GDP-bound forms of Ran between the cytoplasm and nucleus. Mediates the nuclear import of UBC9, the RBM8A/MAGOH complex, PAX6 and probably other members of the paired homeobox family. Also mediates nuclear export of eIF-1A, and the cytoplasmic release of eIF-1A is triggered by the loading of import substrates onto IPO13. This is Importin-13 (IPO13) from Pongo abelii (Sumatran orangutan).